The primary structure comprises 705 residues: Elongation factor G (705 aa).

A tr-type G domain is found at 8-290 (ERYRNFGIMA…GVVHLLPSPA (283 aa)). GTP contacts are provided by residues 17 to 24 (AHIDAGKT), 88 to 92 (DTPGH), and 142 to 145 (NKMD). A disordered region spans residues 290–309 (ADRPPVQGIDENEKEDTRDA).

Belongs to the TRAFAC class translation factor GTPase superfamily. Classic translation factor GTPase family. EF-G/EF-2 subfamily.

Its subcellular location is the cytoplasm. Functionally, catalyzes the GTP-dependent ribosomal translocation step during translation elongation. During this step, the ribosome changes from the pre-translocational (PRE) to the post-translocational (POST) state as the newly formed A-site-bound peptidyl-tRNA and P-site-bound deacylated tRNA move to the P and E sites, respectively. Catalyzes the coordinated movement of the two tRNA molecules, the mRNA and conformational changes in the ribosome. The polypeptide is Elongation factor G (Xanthomonas campestris pv. campestris (strain 8004)).